An 83-amino-acid polypeptide reads, in one-letter code: uncharacterized protein (83 aa).

Helical transmembrane passes span 5–22, 32–49, and 56–78; these read VLLSIIIFLGINQNVYSI, IIKIVIILGIVILIFSPA, and IGTILGLACAYFTYKYIIPIFIA.

The protein resides in the cell membrane. This is an uncharacterized protein from Rickettsia prowazekii (strain Madrid E).